We begin with the raw amino-acid sequence, 217 residues long: Large ribosomal subunit protein bL25 (217 aa).

Belongs to the bacterial ribosomal protein bL25 family. CTC subfamily. In terms of assembly, part of the 50S ribosomal subunit; part of the 5S rRNA/L5/L18/L25 subcomplex. Contacts the 5S rRNA. Binds to the 5S rRNA independently of L5 and L18.

In terms of biological role, this is one of the proteins that binds to the 5S RNA in the ribosome where it forms part of the central protuberance. This chain is Large ribosomal subunit protein bL25, found in Methylobacterium sp. (strain 4-46).